A 161-amino-acid chain; its full sequence is Putative 4-hydroxy-4-methyl-2-oxoglutarate aldolase (161 aa).

Residues 77–80 (GGNL) and Arg99 contribute to the substrate site. Asp100 is an a divalent metal cation binding site.

It belongs to the class II aldolase/RraA-like family. Homotrimer. Requires a divalent metal cation as cofactor.

The enzyme catalyses 4-hydroxy-4-methyl-2-oxoglutarate = 2 pyruvate. It carries out the reaction oxaloacetate + H(+) = pyruvate + CO2. Functionally, catalyzes the aldol cleavage of 4-hydroxy-4-methyl-2-oxoglutarate (HMG) into 2 molecules of pyruvate. Also contains a secondary oxaloacetate (OAA) decarboxylase activity due to the common pyruvate enolate transition state formed following C-C bond cleavage in the retro-aldol and decarboxylation reactions. The sequence is that of Putative 4-hydroxy-4-methyl-2-oxoglutarate aldolase from Methylococcus capsulatus (strain ATCC 33009 / NCIMB 11132 / Bath).